The sequence spans 252 residues: Aliphatic sulfonates import ATP-binding protein SsuB 1 (252 aa).

An ABC transporter domain is found at 6-234 (LQLHIAGKRF…PRDRQAHEAA (229 aa)). An ATP-binding site is contributed by 38-45 (GASGCGKS).

The protein belongs to the ABC transporter superfamily. Aliphatic sulfonates importer (TC 3.A.1.17.2) family. As to quaternary structure, the complex is composed of two ATP-binding proteins (SsuB), two transmembrane proteins (SsuC) and a solute-binding protein (SsuA).

It is found in the cell inner membrane. It carries out the reaction ATP + H2O + aliphatic sulfonate-[sulfonate-binding protein]Side 1 = ADP + phosphate + aliphatic sulfonateSide 2 + [sulfonate-binding protein]Side 1.. Part of the ABC transporter complex SsuABC involved in aliphatic sulfonates import. Responsible for energy coupling to the transport system. In Xanthomonas axonopodis pv. citri (strain 306), this protein is Aliphatic sulfonates import ATP-binding protein SsuB 1.